A 335-amino-acid polypeptide reads, in one-letter code: Nucleoid-associated protein KPK_1538 (335 aa).

It belongs to the YejK family.

It localises to the cytoplasm. It is found in the nucleoid. The sequence is that of Nucleoid-associated protein KPK_1538 from Klebsiella pneumoniae (strain 342).